The following is a 1011-amino-acid chain: RAS protein activator like-3 (1011 aa).

The tract at residues 1–38 (MDPPSPSRTSQTQPTATSPLTSYRWHTGGGGEKAAGGF) is disordered. Over residues 7–22 (SRTSQTQPTATSPLTS) the composition is skewed to low complexity. 2 positions are modified to phosphoserine: S18 and S51. Disordered regions lie at residues 52 to 136 (HQEP…PVWD), 151 to 197 (GGEE…GPNQ), and 209 to 230 (KEKKKARLEPRDGPPSALGSRE). Basic residues predominate over residues 81–95 (SRLRLSKALWGRHKN). The segment covering 100-117 (PDPEPEQEAPELEPEPEL) has biased composition (acidic residues). Pro residues predominate over residues 118 to 131 (EPPTPQIPEAPTPN). Phosphoserine is present on residues S164, S166, S167, and S170. The segment covering 179–190 (RDPDRMPGKTEP) has biased composition (basic and acidic residues). The region spanning 197–293 (QVHNVRGLLK…WIEDLRRQFQ (97 aa)) is the PH domain. 3 positions are modified to phosphoserine: S224, S228, and S231. Residue T234 is modified to Phosphothreonine. Positions 284–404 (WIEDLRRQFQ…APAAGLERWF (121 aa)) constitute a C2 domain. Positions 474-682 (GRAQALVTDL…PAMQCFLDQV (209 aa)) constitute a Ras-GAP domain. Disordered stretches follow at residues 756 to 885 (QVHS…LGTH) and 987 to 1011 (LSPRTRGSWSQPQPLKAPCLNGDTT). A phosphoserine mark is found at S787 and S790. The span at 792–808 (RRSESWARPRPDEERPL) shows a compositional bias: basic and acidic residues. 2 stretches are compositionally biased toward polar residues: residues 871–882 (QMDQPQDRNQAL) and 987–999 (LSPRTRGSWSQPQ). Residues 888 to 988 (VNKLAELQCE…RDAVQSLQLS (101 aa)) are a coiled coil. At S988 the chain carries Phosphoserine.

Predominantly expressed in cells of hematopoietic lineages.

It localises to the cytoplasm. The protein resides in the cell cortex. Functionally, functions as a Ras GTPase-activating protein. Plays an important role in the expansion and functions of natural killer T (NKT) cells in the liver by negatively regulating RAS activity and the down-stream ERK signaling pathway. This is RAS protein activator like-3 (RASAL3) from Homo sapiens (Human).